We begin with the raw amino-acid sequence, 86 residues long: Small ribosomal subunit protein bS16 (86 aa).

It belongs to the bacterial ribosomal protein bS16 family.

This Trichormus variabilis (strain ATCC 29413 / PCC 7937) (Anabaena variabilis) protein is Small ribosomal subunit protein bS16.